The primary structure comprises 387 residues: Testis-expressed protein 9 (387 aa).

Disordered regions lie at residues 1-25 (MAGR…LAAG) and 58-133 (REQQ…LKYP). 2 stretches are compositionally biased toward polar residues: residues 70-91 (ALTT…SSEG) and 103-115 (KNTG…QNRL). A coiled-coil region spans residues 184-347 (IGTEAQIRFL…ERQKGELMIG (164 aa)).

In terms of tissue distribution, testis-specific.

The protein resides in the cytoplasm. The protein localises to the cytoskeleton. It is found in the microtubule organizing center. It localises to the centrosome. Its subcellular location is the centriolar satellite. This Mus musculus (Mouse) protein is Testis-expressed protein 9 (Tex9).